The sequence spans 151 residues: Deoxyuridine 5'-triphosphate nucleotidohydrolase (151 aa).

Residues 70 to 72, Asn83, 87 to 89, and Met97 contribute to the substrate site; these read RSG and LID.

It belongs to the dUTPase family. The cofactor is Mg(2+).

It catalyses the reaction dUTP + H2O = dUMP + diphosphate + H(+). It participates in pyrimidine metabolism; dUMP biosynthesis; dUMP from dCTP (dUTP route): step 2/2. This enzyme is involved in nucleotide metabolism: it produces dUMP, the immediate precursor of thymidine nucleotides and it decreases the intracellular concentration of dUTP so that uracil cannot be incorporated into DNA. In Azotobacter vinelandii (strain DJ / ATCC BAA-1303), this protein is Deoxyuridine 5'-triphosphate nucleotidohydrolase.